Reading from the N-terminus, the 252-residue chain is Flagellar L-ring protein (252 aa).

An N-terminal signal peptide occupies residues 1 to 25; it reads MSKSVPLQRIVLVAALMATGGLAGG. C26 carries the N-palmitoyl cysteine lipid modification. C26 carries the S-diacylglycerol cysteine lipid modification.

This sequence belongs to the FlgH family. In terms of assembly, the basal body constitutes a major portion of the flagellar organelle and consists of four rings (L,P,S, and M) mounted on a central rod.

The protein localises to the cell outer membrane. It localises to the bacterial flagellum basal body. Its function is as follows. Assembles around the rod to form the L-ring and probably protects the motor/basal body from shearing forces during rotation. The chain is Flagellar L-ring protein from Rhodopseudomonas palustris (strain ATCC BAA-98 / CGA009).